The following is a 114-amino-acid chain: Cell cycle protein GpsB (114 aa).

Residues 42 to 77 (YQKMADMNNEVVKLSEENHKLKKELEELRLRVATSR) are a coiled coil. The interval 74–99 (ATSRPQDNKSFSSNNTTTNTSSNNVD) is disordered. Residues 85–97 (SSNNTTTNTSSNN) are compositionally biased toward low complexity.

Belongs to the GpsB family. As to quaternary structure, forms polymers through the coiled coil domains. Interacts with PBP1, MreC and EzrA.

It is found in the cytoplasm. Divisome component that associates with the complex late in its assembly, after the Z-ring is formed, and is dependent on DivIC and PBP2B for its recruitment to the divisome. Together with EzrA, is a key component of the system that regulates PBP1 localization during cell cycle progression. Its main role could be the removal of PBP1 from the cell pole after pole maturation is completed. Also contributes to the recruitment of PBP1 to the division complex. Not essential for septum formation. The chain is Cell cycle protein GpsB from Staphylococcus aureus (strain Mu3 / ATCC 700698).